Here is a 505-residue protein sequence, read N- to C-terminus: ATP synthase subunit alpha (505 aa).

170 to 177 (GDRQTGKT) lines the ATP pocket.

Belongs to the ATPase alpha/beta chains family. F-type ATPases have 2 components, CF(1) - the catalytic core - and CF(0) - the membrane proton channel. CF(1) has five subunits: alpha(3), beta(3), gamma(1), delta(1), epsilon(1). CF(0) has four main subunits: a(1), b(1), b'(1) and c(9-12).

The protein localises to the cellular thylakoid membrane. It carries out the reaction ATP + H2O + 4 H(+)(in) = ADP + phosphate + 5 H(+)(out). In terms of biological role, produces ATP from ADP in the presence of a proton gradient across the membrane. The alpha chain is a regulatory subunit. The protein is ATP synthase subunit alpha of Synechococcus sp. (strain ATCC 27144 / PCC 6301 / SAUG 1402/1) (Anacystis nidulans).